The sequence spans 389 residues: 26S proteasome non-ATPase regulatory subunit 6 (389 aa).

The 169-residue stretch at 193–361 (DFKQAAELFL…EIVETNRPDS (169 aa)) folds into the PCI domain.

It belongs to the proteasome subunit S10 family. Component of the 19S proteasome regulatory particle complex. The 26S proteasome consists of a 20S core particle (CP) and two 19S regulatory subunits (RP). The regulatory particle is made of a lid composed of 9 subunits including PSMD6, a base containing 6 ATPases and few additional components.

Its function is as follows. Component of the 26S proteasome, a multiprotein complex involved in the ATP-dependent degradation of ubiquitinated proteins. This complex plays a key role in the maintenance of protein homeostasis by removing misfolded or damaged proteins, which could impair cellular functions, and by removing proteins whose functions are no longer required. Therefore, the proteasome participates in numerous cellular processes, including cell cycle progression, apoptosis, or DNA damage repair. This Homo sapiens (Human) protein is 26S proteasome non-ATPase regulatory subunit 6 (PSMD6).